A 169-amino-acid polypeptide reads, in one-letter code: Phosphopantetheine adenylyltransferase (169 aa).

Serine 10 is a binding site for substrate. ATP-binding positions include 10-11 (SF) and histidine 18. Positions 42, 79, and 93 each coordinate substrate. Residues 94–96 (GLR), glutamate 104, and 129–135 (VRPITAT) contribute to the ATP site.

This sequence belongs to the bacterial CoaD family. As to quaternary structure, homohexamer. Requires Mg(2+) as cofactor.

The protein resides in the cytoplasm. The enzyme catalyses (R)-4'-phosphopantetheine + ATP + H(+) = 3'-dephospho-CoA + diphosphate. It functions in the pathway cofactor biosynthesis; coenzyme A biosynthesis; CoA from (R)-pantothenate: step 4/5. In terms of biological role, reversibly transfers an adenylyl group from ATP to 4'-phosphopantetheine, yielding dephospho-CoA (dPCoA) and pyrophosphate. In Rhodopseudomonas palustris (strain ATCC BAA-98 / CGA009), this protein is Phosphopantetheine adenylyltransferase.